The following is a 308-amino-acid chain: UDP-3-O-acyl-N-acetylglucosamine deacetylase (308 aa).

Zn(2+) is bound by residues His-77, His-233, and Asp-237. Catalysis depends on His-260, which acts as the Proton donor.

Belongs to the LpxC family. Zn(2+) is required as a cofactor.

It carries out the reaction a UDP-3-O-[(3R)-3-hydroxyacyl]-N-acetyl-alpha-D-glucosamine + H2O = a UDP-3-O-[(3R)-3-hydroxyacyl]-alpha-D-glucosamine + acetate. It participates in glycolipid biosynthesis; lipid IV(A) biosynthesis; lipid IV(A) from (3R)-3-hydroxytetradecanoyl-[acyl-carrier-protein] and UDP-N-acetyl-alpha-D-glucosamine: step 2/6. In terms of biological role, catalyzes the hydrolysis of UDP-3-O-myristoyl-N-acetylglucosamine to form UDP-3-O-myristoylglucosamine and acetate, the committed step in lipid A biosynthesis. In Nitratidesulfovibrio vulgaris (strain ATCC 29579 / DSM 644 / CCUG 34227 / NCIMB 8303 / VKM B-1760 / Hildenborough) (Desulfovibrio vulgaris), this protein is UDP-3-O-acyl-N-acetylglucosamine deacetylase.